A 763-amino-acid chain; its full sequence is Amine oxidase [copper-containing] 3 (763 aa).

Over 1–6 (MNQKTT) the chain is Cytoplasmic. The helical; Signal-anchor for type II membrane protein transmembrane segment at 7–27 (LVLLALAVITIFALVCVLIAG) threads the bilayer. Residues 28-763 (RGGDGGEASQ…AFSHGGFFTN (736 aa)) lie on the Extracellular side of the membrane. An N-linked (GlcNAc...) asparagine glycan is attached at N137. A disulfide bridge connects residues C198 and C199. N-linked (GlcNAc...) asparagine glycans are attached at residues N232 and N294. Catalysis depends on D386, which acts as the Proton acceptor. Residues C404 and C430 are joined by a disulfide bond. The active-site Schiff-base intermediate with substrate; via topaquinone is the Y471. 2',4',5'-topaquinone is present on Y471. Residues H520 and H522 each contribute to the Cu(2+) site. Ca(2+) is bound by residues D529, L530, D531, and E572. Residue N618 is glycosylated (N-linked (GlcNAc...) asparagine). E641, F663, and N665 together coordinate Ca(2+). A glycan (N-linked (GlcNAc...) asparagine) is linked at N666. Ca(2+)-binding residues include E667, D673, and L674. Cu(2+) is bound at residue H684. C734 and C741 are oxidised to a cystine.

This sequence belongs to the copper/topaquinone oxidase family. Homodimer; disulfide-linked. Probably forms heterodimers with AOC2. It depends on Cu(2+) as a cofactor. Requires Ca(2+) as cofactor. L-topaquinone is required as a cofactor. Topaquinone (TPQ) is generated by copper-dependent autoxidation of a specific tyrosyl residue. In terms of processing, N- and O-glycosylated.

The protein localises to the cell membrane. The catalysed reaction is methylamine + O2 + H2O = formaldehyde + H2O2 + NH4(+). It catalyses the reaction benzylamine + O2 + H2O = benzaldehyde + H2O2 + NH4(+). The enzyme catalyses 2-phenylethylamine + O2 + H2O = 2-phenylacetaldehyde + H2O2 + NH4(+). Catalyzes the oxidative deamination of primary amines to the corresponding aldehydes with the concomitant production of hydrogen peroxide and ammonia. Has a preference for the primary monoamines methylamine and benzylamine. Could also act on 2-phenylethylamine but much less efficiently. At endothelial cells surface can also function as a cell adhesion protein that participates in lymphocyte extravasation and recirculation by mediating the binding of lymphocytes to peripheral lymph node vascular endothelial cells in an L-selectin-independent fashion. This is Amine oxidase [copper-containing] 3 from Bos taurus (Bovine).